We begin with the raw amino-acid sequence, 61 residues long: MGCGNSTAASTTPGPAESAKDVQDDSSMDEEKRRNYGGVYVGIPADLTNETAGQTASTHKE.

Positions 1-13 (MGCGNSTAASTTP) are enriched in polar residues. Positions 1–61 (MGCGNSTAAS…AGQTASTHKE (61 aa)) are disordered. The span at 18 to 34 (SAKDVQDDSSMDEEKRR) shows a compositional bias: basic and acidic residues. The segment covering 48–61 (TNETAGQTASTHKE) has biased composition (polar residues).

It belongs to the OCC1 family.

This Danio rerio (Zebrafish) protein is Overexpressed in colon carcinoma 1 protein homolog (si:dkey-261e22.4).